Reading from the N-terminus, the 327-residue chain is MIPETLNPLNYYTSLVPDLIPAATVPIIILICVLFLIWNHEGTSSIPGPGYCMGIGPLISHGRFLWMGVGNACNYYNKTYGEFVRVWFSGEETFIISYFDAWQALLLKPDIFFKISWLCKKYEEAAKDLKGAMEILIEQKRQKLSTVEKLDEHMDFASQLIFAQNRGDLTAENVNQCVLEMMIAAPDTLSVTLFIMLILIAEHPTVEEKMMREIETVMGDRDVQSDDMPNLKIVENFIYESMRYQPVVDLIMRKALQDDVIDGYPVKKGTNIILNIGRMHKLEFFPKPNEFSLENFEKNVPSRYFQPFGFGPRGCVGKFIAMVMMKA.

A heme-binding site is contributed by Cys-315.

It belongs to the cytochrome P450 family. Requires heme as cofactor.

It localises to the membrane. The catalysed reaction is testosterone + 3 reduced [NADPH--hemoprotein reductase] + 3 O2 = 17beta-estradiol + formate + 3 oxidized [NADPH--hemoprotein reductase] + 4 H2O + 4 H(+). The enzyme catalyses androst-4-ene-3,17-dione + 3 reduced [NADPH--hemoprotein reductase] + 3 O2 = estrone + formate + 3 oxidized [NADPH--hemoprotein reductase] + 4 H2O + 4 H(+). Its function is as follows. Catalyzes the formation of aromatic C18 estrogens from C19 androgens. This Coturnix japonica (Japanese quail) protein is Aromatase (CYP19A1).